A 60-amino-acid polypeptide reads, in one-letter code: Short neurotoxin 1 (60 aa).

4 disulfides stabilise this stretch: cysteine 3/cysteine 22, cysteine 17/cysteine 39, cysteine 41/cysteine 52, and cysteine 53/cysteine 58.

Belongs to the three-finger toxin family. Short-chain subfamily. Type I alpha-neurotoxin sub-subfamily. As to expression, expressed by the venom gland.

It localises to the secreted. In terms of biological role, binds to muscle nicotinic acetylcholine receptor (nAChR) and inhibit acetylcholine from binding to the receptor, thereby impairing neuromuscular transmission. The sequence is that of Short neurotoxin 1 from Hydrophis ornatus (Ornate reef seasnake).